A 176-amino-acid chain; its full sequence is MTTIVSVRRENEVAMGGDGQVSLGNTVMKGNARKVRRLYNGQVIAGFAGGTADAFTLFERFEAQLEKHQGNLTRAAVELAKDWRTDRALRKLEALLAVADKTASLIITGNGDVIEPEQGLIAIGSGGPFAQAAARALLENTELSAHEIAEKALEIAGDICIYTNQNRTLEVLPIKD.

Thr2 is a catalytic residue. 3 residues coordinate Na(+): Gly157, Cys160, and Thr163.

Belongs to the peptidase T1B family. HslV subfamily. In terms of assembly, a double ring-shaped homohexamer of HslV is capped on each side by a ring-shaped HslU homohexamer. The assembly of the HslU/HslV complex is dependent on binding of ATP.

It is found in the cytoplasm. The catalysed reaction is ATP-dependent cleavage of peptide bonds with broad specificity.. Its activity is regulated as follows. Allosterically activated by HslU binding. Its function is as follows. Protease subunit of a proteasome-like degradation complex believed to be a general protein degrading machinery. The chain is ATP-dependent protease subunit HslV from Marinobacter nauticus (strain ATCC 700491 / DSM 11845 / VT8) (Marinobacter aquaeolei).